The primary structure comprises 343 residues: Vancomycin/teicoplanin A-type resistance protein VanA (343 aa).

ATP-binding positions include Lys-133, 169–171 (FVK), 177–178 (SS), 207–214 (EQAVSGCE), and Phe-241. Residues 137-338 (YIVAKNAGIA…LPELIDRLIV (202 aa)) enclose the ATP-grasp domain. Substrate is bound at residue His-244. Residue 304–305 (NE) participates in ATP binding. Mg(2+)-binding residues include Glu-305 and Asn-307.

The protein belongs to the D-alanine--D-alanine ligase family. Mg(2+) serves as cofactor. Requires Mn(2+) as cofactor.

The protein localises to the cell membrane. The catalysed reaction is (R)-lactate + D-alanine + ATP = D-alanyl-(R)-lactate + ADP + phosphate. Required for high-level resistance to glycopeptide antibiotics. D-Ala--D-Ala ligase of altered specificity which catalyzes ester bond formation between D-Ala and various D-hydroxy acids; produces a peptidoglycan which does not terminate in D-alanine but in D-lactate, thus preventing vancomycin or teicoplanin binding. The sequence is that of Vancomycin/teicoplanin A-type resistance protein VanA (vanA) from Enterococcus faecium (Streptococcus faecium).